Reading from the N-terminus, the 557-residue chain is TNF receptor-associated factor 5 (557 aa).

Residues 45 to 85 form an RING-type zinc finger; it reads CAFCHSVLHNPHQTGCGHRFCQHCILSLRELNTVPICPVDK. 2 consecutive TRAF-type zinc fingers follow at residues 127 to 181 and 182 to 239; these read DHLQ…INLQ and NHEE…RNLQ. Residues 237-342 are a coiled coil; sequence NLQQHEHSAL…VNQQQNKFDL (106 aa). Residue Lys-318 forms a Glycyl lysine isopeptide (Lys-Gly) (interchain with G-Cter in ubiquitin) linkage. Residues 345-557 are interaction with EIF2AK2/PKR; it reads LMEAVDTVKQ…AVDLTDLEDL (213 aa). The MATH domain maps to 403–549; that stretch reads NGKLIWKVTD…DDTLFLKVAV (147 aa).

This sequence belongs to the TNF receptor-associated factor family. A subfamily. In terms of assembly, homotrimer. Heteromer with TRAF3. Associates with TNFRSF5/CD40 through interaction with TRAF3. Associates with LTBR/TNFRSF3, TNFRSF4, TNFRSF8/CD30, TNFRSF11A/RANK, TNFRSF13B/TACI, TNFRSF14, TNFRSF17, TNFRSF19/TROY, RIPK2, MAP3K14, MAP3K5, and TRAF and TNF receptor associated protein TDP2. Interacts (via C-terminus) with EIF2AK2/PKR (via the kinase catalytic domain). Ubiquitinated at Lys-318 by the SCF(FBXL2) complex, leading to its degradation by the proteasome. In terms of tissue distribution, expressed in spleen, thymus, prostate, testis, ovary, small intestine, colon, and peripheral blood.

It is found in the cytoplasm. It localises to the cytosol. Its function is as follows. Adapter protein and signal transducer that links members of the tumor necrosis factor receptor family to different signaling pathways by association with the receptor cytoplasmic domain and kinases. Mediates activation of NF-kappa-B and probably JNK. Seems to be involved in apoptosis. Plays a role in mediating activation of NF-kappa-B by EIF2AK2/PKR. The chain is TNF receptor-associated factor 5 (TRAF5) from Homo sapiens (Human).